Consider the following 107-residue polypeptide: Large ribosomal subunit protein uL24 (107 aa).

Belongs to the universal ribosomal protein uL24 family. Part of the 50S ribosomal subunit.

In terms of biological role, one of two assembly initiator proteins, it binds directly to the 5'-end of the 23S rRNA, where it nucleates assembly of the 50S subunit. Its function is as follows. One of the proteins that surrounds the polypeptide exit tunnel on the outside of the subunit. The protein is Large ribosomal subunit protein uL24 of Carboxydothermus hydrogenoformans (strain ATCC BAA-161 / DSM 6008 / Z-2901).